The chain runs to 378 residues: Coiled-coil domain-containing protein 74A (378 aa).

3 disordered regions span residues 1 to 52 (MSGA…RNLD), 128 to 211 (GGPS…EEPL), and 301 to 328 (EGSQ…PKVS). Over residues 34-44 (LRPQSPQLRQS) the composition is skewed to polar residues. A coiled-coil region spans residues 47–90 (QKRNLDLEKSLQFLQQQHSEMLAKLHEEIEHLKRENKDLHYKLI). Residues 141-151 (RTHRPGGKRGR) show a composition bias toward basic residues. The span at 165–182 (DSLSMSSFQSVKSISNSG) shows a compositional bias: polar residues. 2 stretches are compositionally biased toward basic and acidic residues: residues 194–205 (QDSKADVSQKAD) and 314–323 (SFPRDQEATH).

The chain is Coiled-coil domain-containing protein 74A (CCDC74A) from Homo sapiens (Human).